The chain runs to 123 residues: MARIAGVNIPTNKRIVIALTYIYGIGLSLANRICEGCNIDHNVRVVNLSDDEIIRIRNFIRENYIVEGDLRKEVSMNIKFLTDIGCYRGLRHRRGLPVRGQRTHTNAKTRKGRSKLPVAAKKK.

A disordered region spans residues 97–123 (PVRGQRTHTNAKTRKGRSKLPVAAKKK).

It belongs to the universal ribosomal protein uS13 family. In terms of assembly, part of the 30S ribosomal subunit. Forms a loose heterodimer with protein S19. Forms two bridges to the 50S subunit in the 70S ribosome.

In terms of biological role, located at the top of the head of the 30S subunit, it contacts several helices of the 16S rRNA. In the 70S ribosome it contacts the 23S rRNA (bridge B1a) and protein L5 of the 50S subunit (bridge B1b), connecting the 2 subunits; these bridges are implicated in subunit movement. Contacts the tRNAs in the A and P-sites. The protein is Small ribosomal subunit protein uS13 of Ehrlichia chaffeensis (strain ATCC CRL-10679 / Arkansas).